A 183-amino-acid chain; its full sequence is ATP synthase subunit b, chloroplastic (183 aa).

A helical membrane pass occupies residues 28–48 (DIFEANVINILLLLFGLIYVL).

The protein belongs to the ATPase B chain family. As to quaternary structure, F-type ATPases have 2 components, F(1) - the catalytic core - and F(0) - the membrane proton channel. F(1) has five subunits: alpha(3), beta(3), gamma(1), delta(1), epsilon(1). F(0) has four main subunits: a(1), b(1), b'(1) and c(10-14). The alpha and beta chains form an alternating ring which encloses part of the gamma chain. F(1) is attached to F(0) by a central stalk formed by the gamma and epsilon chains, while a peripheral stalk is formed by the delta, b and b' chains.

Its subcellular location is the plastid. The protein localises to the chloroplast thylakoid membrane. Its function is as follows. F(1)F(0) ATP synthase produces ATP from ADP in the presence of a proton or sodium gradient. F-type ATPases consist of two structural domains, F(1) containing the extramembraneous catalytic core and F(0) containing the membrane proton channel, linked together by a central stalk and a peripheral stalk. During catalysis, ATP synthesis in the catalytic domain of F(1) is coupled via a rotary mechanism of the central stalk subunits to proton translocation. In terms of biological role, component of the F(0) channel, it forms part of the peripheral stalk, linking F(1) to F(0). The chain is ATP synthase subunit b, chloroplastic from Porphyra purpurea (Red seaweed).